The chain runs to 338 residues: Aspartate carbamoyltransferase catalytic subunit (338 aa).

Positions 59 and 60 each coordinate carbamoyl phosphate. K87 contacts L-aspartate. Carbamoyl phosphate is bound by residues R109, H142, and Q145. L-aspartate is bound by residues R182 and R248. G289 and P290 together coordinate carbamoyl phosphate.

This sequence belongs to the aspartate/ornithine carbamoyltransferase superfamily. ATCase family. Heterododecamer (2C3:3R2) of six catalytic PyrB chains organized as two trimers (C3), and six regulatory PyrI chains organized as three dimers (R2).

It carries out the reaction carbamoyl phosphate + L-aspartate = N-carbamoyl-L-aspartate + phosphate + H(+). Its pathway is pyrimidine metabolism; UMP biosynthesis via de novo pathway; (S)-dihydroorotate from bicarbonate: step 2/3. Catalyzes the condensation of carbamoyl phosphate and aspartate to form carbamoyl aspartate and inorganic phosphate, the committed step in the de novo pyrimidine nucleotide biosynthesis pathway. The sequence is that of Aspartate carbamoyltransferase catalytic subunit from Synechococcus elongatus (strain ATCC 33912 / PCC 7942 / FACHB-805) (Anacystis nidulans R2).